The following is a 454-amino-acid chain: Probable xylan O-acetyltransferase 9 (454 aa).

Residues 1–15 are Cytoplasmic-facing; that stretch reads MKAPPPPSPVAKRAR. The helical; Signal-anchor for type II membrane protein transmembrane segment at 16–36 threads the bilayer; that stretch reads VSPFVFLLVLFLLLFSFLYGE. The Lumenal portion of the chain corresponds to 37–454; it reads DLKELLGSQA…ELLYTKLFYP (418 aa). Disulfide bonds link Cys-101/Cys-152, Cys-123/Cys-188, Cys-132/Cys-435, and Cys-352/Cys-431. A GDS motif motif is present at residues 175–177; sequence GDS. Residue Ser-177 is the Nucleophile of the active site. 3 N-linked (GlcNAc...) asparagine glycosylation sites follow: Asn-219, Asn-293, and Asn-394. Asp-430 functions as the Proton donor in the catalytic mechanism. The DXXH motif motif lies at 430–433; the sequence is DCVH. His-433 (proton acceptor) is an active-site residue.

It belongs to the PC-esterase family. TBL subfamily.

It localises to the golgi apparatus membrane. Functionally, probable xylan acetyltransferase required for 2-O- and 3-O-monoacetylation of xylosyl residues in xylan. Possesses extremely low activity in vitro. This is Probable xylan O-acetyltransferase 9 from Oryza sativa subsp. japonica (Rice).